The sequence spans 742 residues: Photosystem I P700 chlorophyll a apoprotein A2 (742 aa).

Transmembrane regions (helical) follow at residues 46 to 69 (LFSTHFGHLAIIALWVAGNLFHIA), 135 to 158 (LFQASIFMSILACWTLFAGWLHLQ), 175 to 199 (LNHHLAVLFGFSSIAWTGHLVHVAI), 273 to 291 (IAHHHIAIGTVFIIAGHMY), 336 to 359 (LHFQLGLALAALGVATSLVAQHMG), 375 to 401 (SALYTHHQYIAMFLMVGAFAHGAIFFV), 423 to 445 (ALISHLSWVTMILGFHTLGIYVH), and 525 to 543 (FLVHHAIALGLHTTALILI). Residues cysteine 567 and cysteine 576 each coordinate [4Fe-4S] cluster. The next 2 membrane-spanning stretches (helical) occupy residues 583-604 (AMYLAMFWALNLIAWVTFYWHW) and 651-673 (LSVWAWMFLFGHLVWATGFMFLI). Residues histidine 662, methionine 670, and tyrosine 678 each coordinate divinyl chlorophyll a. Position 679 (tryptophan 679) interacts with phylloquinone. Residues 715–735 (LVGLAHFTIGNILTFGAFVIA) traverse the membrane as a helical segment.

This sequence belongs to the PsaA/PsaB family. As to quaternary structure, the PsaA/B heterodimer binds the P700 divinyl chlorophyll special pair and subsequent electron acceptors. PSI consists of a core antenna complex that captures photons, and an electron transfer chain that converts photonic excitation into a charge separation. The cyanobacterial PSI reaction center is composed of one copy each of PsaA,B,C,D,E,F,I,J,K,L,M and X, and forms trimeric complexes. The cofactor is PSI electron transfer chain: 5 divinyl chlorophyll a, 1 divinyl chlorophyll a', 2 phylloquinones and 3 4Fe-4S clusters. PSI core antenna: 90 divinyl chlorophyll a, 22 carotenoids, 3 phospholipids and 1 galactolipid. P700 is a divinyl chlorophyll a/divinyl chlorophyll a' dimer, A0 is one or more divinyl chlorophyll a, A1 is one or both phylloquinones and FX is a shared 4Fe-4S iron-sulfur center..

The protein localises to the cellular thylakoid membrane. It carries out the reaction reduced [plastocyanin] + hnu + oxidized [2Fe-2S]-[ferredoxin] = oxidized [plastocyanin] + reduced [2Fe-2S]-[ferredoxin]. In terms of biological role, psaA and PsaB bind P700, the primary electron donor of photosystem I (PSI), as well as the electron acceptors A0, A1 and FX. PSI is a plastocyanin/cytochrome c6-ferredoxin oxidoreductase, converting photonic excitation into a charge separation, which transfers an electron from the donor P700 chlorophyll pair to the spectroscopically characterized acceptors A0, A1, FX, FA and FB in turn. Oxidized P700 is reduced on the lumenal side of the thylakoid membrane by plastocyanin or cytochrome c6. The chain is Photosystem I P700 chlorophyll a apoprotein A2 from Prochlorococcus marinus (strain MIT 9515).